Here is a 272-residue protein sequence, read N- to C-terminus: Urease accessory protein UreD (272 aa).

Belongs to the UreD family. UreD, UreF and UreG form a complex that acts as a GTP-hydrolysis-dependent molecular chaperone, activating the urease apoprotein by helping to assemble the nickel containing metallocenter of UreC. The UreE protein probably delivers the nickel.

The protein localises to the cytoplasm. Its function is as follows. Required for maturation of urease via the functional incorporation of the urease nickel metallocenter. The protein is Urease accessory protein UreD of Opitutus terrae (strain DSM 11246 / JCM 15787 / PB90-1).